Here is a 491-residue protein sequence, read N- to C-terminus: Glutamyl-tRNA(Gln) amidotransferase subunit A (491 aa).

Catalysis depends on charge relay system residues Lys79 and Ser154. Catalysis depends on Ser178, which acts as the Acyl-ester intermediate.

The protein belongs to the amidase family. GatA subfamily. As to quaternary structure, heterotrimer of A, B and C subunits.

The enzyme catalyses L-glutamyl-tRNA(Gln) + L-glutamine + ATP + H2O = L-glutaminyl-tRNA(Gln) + L-glutamate + ADP + phosphate + H(+). Its function is as follows. Allows the formation of correctly charged Gln-tRNA(Gln) through the transamidation of misacylated Glu-tRNA(Gln) in organisms which lack glutaminyl-tRNA synthetase. The reaction takes place in the presence of glutamine and ATP through an activated gamma-phospho-Glu-tRNA(Gln). This chain is Glutamyl-tRNA(Gln) amidotransferase subunit A, found in Synechococcus sp. (strain CC9902).